The primary structure comprises 755 residues: Tryptophan 2-monooxygenase (755 aa).

Positions 247, 267, 275, and 295 each coordinate FMN. Arg-295 provides a ligand contact to substrate.

The protein belongs to the tryptophan 2-monooxygenase family. Requires FMN as cofactor.

The catalysed reaction is L-tryptophan + O2 = indole-3-acetamide + CO2 + H2O. The protein operates within plant hormone metabolism; auxin biosynthesis. The protein is Tryptophan 2-monooxygenase (tms1) of Rhizobium radiobacter (Agrobacterium tumefaciens).